We begin with the raw amino-acid sequence, 204 residues long: Prephenate decarboxylase (204 aa).

This sequence belongs to the prephenate decarboxylase family.

It localises to the cytoplasm. It catalyses the reaction prephenate + H(+) = 3-[(4R)-4-hydroxycyclohexa-1,5-dien-1-yl]-2-oxopropanoate + CO2. The protein operates within antibiotic biosynthesis; bacilysin biosynthesis. Part of the bacABCDEF operon responsible for the biosynthesis of the nonribosomally synthesized dipeptide antibiotic bacilysin, composed of L-alanine and L-anticapsin. Bacilysin is an irreversible inactivator of the glutaminase domain of glucosamine synthetase. BacA is an unusual prephenate decarboxylase that avoids the typical aromatization of the cyclohexadienol ring of prephenate. BacA catalyzes the protonation of prephenate (1-carboxy-4-hydroxy-alpha-oxo-2,5-cyclohexadiene-1-propanoic acid) at C6 position, followed by a decarboxylation to produce the endocyclic-delta(4),delta(8)-7R-dihydro-hydroxyphenylpyruvate (en-H2HPP). En-H2HPP is able to undergo a slow nonenzymatic isomerization to produce the exocyclic-delta(3),delta(5)-dihydro-hydroxyphenylpyruvate (ex-H2HPP). BacA isomerizes only the pro-R double bond in prephenate. In Bacillus subtilis (strain 168), this protein is Prephenate decarboxylase.